Consider the following 381-residue polypeptide: Sulfofructose kinase (381 aa).

ATP contacts are provided by residues G10, 72 to 73 (RY), and 100 to 103 (GNGT). N101 lines the Mg(2+) pocket. The active-site Proton acceptor is D131.

The protein belongs to the phosphofructokinase type A (PFKA) family. Mg(2+) serves as cofactor.

The enzyme catalyses 6-deoxy-6-sulfo-D-fructose + ATP = 6-deoxy-6-sulfo-D-fructose 1-phosphate + ADP + H(+). Part of the sulfo-EMP2 pathway, a D-sulfoquinovose degradation pathway that produces sulfolactate (SL). Phosphorylates 6-deoxy-6-sulfo-D-fructose (SF) to 6-deoxy-6-sulfo-D-fructose 1-phosphate (SFP). In Alkalicoccus urumqiensis (Bacillus urumqiensis), this protein is Sulfofructose kinase.